The chain runs to 1310 residues: Contactin-associated protein-like 4 (1310 aa).

Residues 1-27 (MNMGSVAGAVLKMLLLLSTQNWNRVEA) form the signal peptide. Over 28–1243 (GNSYDCDEPL…LTHAIKSDSA (1216 aa)) the chain is Extracellular. Residues 33-179 (CDEPLVSALP…IGMRIEVFGC (147 aa)) enclose the F5/8 type C domain. A disulfide bond links Cys-33 and Cys-179. The Laminin G-like 1 domain occupies 214-346 (FKTMESDGIL…NLFYNGVDVI (133 aa)). N-linked (GlcNAc...) asparagine glycosylation is found at Asn-262, Asn-287, and Asn-361. Disulfide bonds link Cys-334–Cys-366, Cys-517–Cys-549, Cys-555–Cys-566, and Cys-560–Cys-575. One can recognise a Laminin G-like 2 domain in the interval 400–529 (FRTWNKAGLL…LISINNKMVD (130 aa)). Asn-540 carries an N-linked (GlcNAc...) asparagine glycan. Positions 551-588 (ISDRCLPNSCEHGGECSQSWSTFHCNCTNTGYTGATCH) constitute an EGF-like 1 domain. An N-linked (GlcNAc...) asparagine glycan is attached at Asn-576. Residues Cys-577 and Cys-587 are joined by a disulfide bond. In terms of domain architecture, Fibrinogen C-terminal spans 589 to 794 (SSVYEQSCEA…LLCRGDRPFW (206 aa)). Residues Asn-604, Asn-627, Asn-639, Asn-708, and Asn-750 are each glycosylated (N-linked (GlcNAc...) asparagine). One can recognise a Laminin G-like 3 domain in the interval 795–960 (NAASFNTEAS…TVTPGVQPGC (166 aa)). 4 cysteine pairs are disulfide-bonded: Cys-933-Cys-960, Cys-964-Cys-977, Cys-971-Cys-986, and Cys-988-Cys-998. Positions 960–999 (CRGHCGSYGKLCRHGGKCREKPSGFFCDCSSSAYAGPFCS) constitute an EGF-like 2 domain. 3 N-linked (GlcNAc...) asparagine glycosylation sites follow: Asn-1019, Asn-1025, and Asn-1075. One can recognise a Laminin G-like 4 domain in the interval 1048-1204 (FRTTRAPSLL…VTGHVTESSC (157 aa)). Cys-1169 and Cys-1204 form a disulfide bridge. A helical membrane pass occupies residues 1244 to 1264 (VIGGLIAVVIFILLCVSAIAV). Residues 1265 to 1310 (RIYQQKRLYKRNEAKRSENVDSAEAVLKSELHIQNAVGENQKEYFF) are Cytoplasmic-facing.

This sequence belongs to the neurexin family. Interacts with TIAM1. As to expression, specifically present in developing cortical interneurons: highly expressed in cortical parvalbumin (PV) cells and midbrain dopaminergic neurons and is localized presynaptically (at protein level). Also present in the substantia nigra pars compacta (SnC) and ventral tegmental area (VTA) midbrain dopaminergic projection populations.

The protein resides in the presynaptic cell membrane. Functionally, presynaptic protein involved in both dopaminergic synaptic transmission and GABAergic system, thereby participating in the structural maturation of inhibitory interneuron synapses. Involved in the dopaminergic synaptic transmission by attenuating dopamine release through a presynaptic mechanism. Also participates in the GABAergic system. The chain is Contactin-associated protein-like 4 (Cntnap4) from Mus musculus (Mouse).